The chain runs to 190 residues: Protein LZIC (190 aa).

The stretch at 2–63 (ASRGKTETSK…SEFNDSLKKI (62 aa)) forms a coiled coil.

Belongs to the CTNNBIP1 family. In terms of assembly, does not interact with CTNNB1.

The polypeptide is Protein LZIC (Lzic) (Rattus norvegicus (Rat)).